A 90-amino-acid polypeptide reads, in one-letter code: WAP four-disulfide core domain protein 12 (90 aa).

A signal peptide spans 1–23; it reads MGSSSFLVLMVSLALVTLVAVEG. The 48-residue stretch at 27-74 folds into the WAP domain; sequence GIEKAGVCPADNVRCFKSDPPQCHTDQDCLGERKCCYLHCGFKCVIPV. 4 disulfide bridges follow: Cys34–Cys62, Cys41–Cys66, Cys49–Cys61, and Cys55–Cys70.

The protein localises to the secreted. Functionally, antibacterial protein. Putative acid-stable proteinase inhibitor. This is WAP four-disulfide core domain protein 12 (WFDC12) from Gorilla gorilla gorilla (Western lowland gorilla).